The following is a 214-amino-acid chain: Leucyl/phenylalanyl-tRNA--protein transferase (214 aa).

It belongs to the L/F-transferase family.

It is found in the cytoplasm. The enzyme catalyses N-terminal L-lysyl-[protein] + L-leucyl-tRNA(Leu) = N-terminal L-leucyl-L-lysyl-[protein] + tRNA(Leu) + H(+). It catalyses the reaction N-terminal L-arginyl-[protein] + L-leucyl-tRNA(Leu) = N-terminal L-leucyl-L-arginyl-[protein] + tRNA(Leu) + H(+). The catalysed reaction is L-phenylalanyl-tRNA(Phe) + an N-terminal L-alpha-aminoacyl-[protein] = an N-terminal L-phenylalanyl-L-alpha-aminoacyl-[protein] + tRNA(Phe). In terms of biological role, functions in the N-end rule pathway of protein degradation where it conjugates Leu, Phe and, less efficiently, Met from aminoacyl-tRNAs to the N-termini of proteins containing an N-terminal arginine or lysine. The sequence is that of Leucyl/phenylalanyl-tRNA--protein transferase from Cereibacter sphaeroides (strain ATCC 17029 / ATH 2.4.9) (Rhodobacter sphaeroides).